The following is a 338-amino-acid chain: DNA-directed RNA polymerase subunit alpha (338 aa).

The tract at residues 1-233 (MYKNWRELIK…EQLQIFINFD (233 aa)) is alpha N-terminal domain (alpha-NTD). Positions 250-338 (INENLYRSVE…KMIQEGKEDL (89 aa)) are alpha C-terminal domain (alpha-CTD).

The protein belongs to the RNA polymerase alpha chain family. As to quaternary structure, homodimer. The RNAP catalytic core consists of 2 alpha, 1 beta, 1 beta' and 1 omega subunit. When a sigma factor is associated with the core the holoenzyme is formed, which can initiate transcription.

It carries out the reaction RNA(n) + a ribonucleoside 5'-triphosphate = RNA(n+1) + diphosphate. DNA-dependent RNA polymerase catalyzes the transcription of DNA into RNA using the four ribonucleoside triphosphates as substrates. The chain is DNA-directed RNA polymerase subunit alpha from Syntrophotalea carbinolica (strain DSM 2380 / NBRC 103641 / GraBd1) (Pelobacter carbinolicus).